Consider the following 314-residue polypeptide: Homeobox protein knotted-1-like 3 (314 aa).

The 21-residue stretch at 218 to 238 (ELKIELKQGFKSRIEDVREEI) folds into the ELK domain. The homeobox; TALE-type DNA-binding region spans 239-302 (LRKRRAGKLP…NQRKRNWHNN (64 aa)).

The protein belongs to the TALE/KNOX homeobox family. As to expression, isoform 1 is expressed in roots and flowers, and at lower levels in leaf blades and leaf sheaths. Isoform 2 is expressed in roots and flowers.

The protein resides in the nucleus. This chain is Homeobox protein knotted-1-like 3 (HOS66), found in Oryza sativa subsp. japonica (Rice).